The primary structure comprises 589 residues: Zinc finger protein 131 (589 aa).

In terms of domain architecture, BTB spans 34 to 98 (TDITLIVDGH…TYTAKLMIQG (65 aa)). Positions 137–148 (TGKNEAKKRKIA) match the Nuclear localization signal 1 motif. Positions 224 to 234 (GDRKGQIKEDG) are enriched in basic and acidic residues. Residues 224-247 (GDRKGQIKEDGCPSDPTSKQEHMK) form a disordered region. 2 consecutive C2H2-type zinc fingers follow at residues 254-277 (FKCEICNKRYLRESAWKQHLNCYH) and 294-316 (HVCQYCEKQFDHFGHFKEHLRKH). Residues lysine 255 and lysine 261 each participate in a glycyl lysine isopeptide (Lys-Gly) (interchain with G-Cter in SUMO2) cross-link. The Nuclear localization signal 2 signature appears at 283–294 (VSKKQRTGKKIH). Residues 322–347 (FECPNCHERFARNSTLKCHLTACQTG) form a C2H2-type 3; degenerate zinc finger. C2H2-type zinc fingers lie at residues 358 to 380 (YECQVCNSVFNSWDQFKDHLVIH) and 386 to 409 (NHCTLCDLWFMQGNELRRHLSDAH). Residues 539 to 583 (NQEERESSQADAAEAAREDHEDAEDLETKPTVDSEAEKAENEDRT) are compositionally biased toward basic and acidic residues. Positions 539–589 (NQEERESSQADAAEAAREDHEDAEDLETKPTVDSEAEKAENEDRTAMPVLE) are disordered. Residue lysine 567 forms a Glycyl lysine isopeptide (Lys-Gly) (interchain with G-Cter in SUMO) linkage.

It belongs to the krueppel C2H2-type zinc-finger protein family. In terms of processing, monosumoylated at Lys-567 by CBX4 and UHRF2. Sumoylation may potentiate ZNF131 inhibition of estrogen signaling. Sumoylation does not interfere with ubiquitination. Post-translationally, ubiquitinated.

It is found in the nucleus. Functionally, may be involved in transcriptional regulation as a repressor of ESR1/ER-alpha signaling. Plays a role during development and organogenesis as well as in the function of the adult central nervous system. The protein is Zinc finger protein 131 (ZNF131) of Pongo abelii (Sumatran orangutan).